Consider the following 374-residue polypeptide: Heme A synthase (374 aa).

8 helical membrane passes run 22 to 42, 107 to 127, 135 to 155, 172 to 192, 209 to 229, 265 to 285, 306 to 326, and 327 to 347; these read VAVWLLVCAGMVFAMAIIGAI, LWGRLIGVVFLLPFVWFWVRG, PTLAGLFLLGGLQGFIGWFMV, LHLGMAFLIYAALLKVALGLL, AWAALALLGVTIVWGAFVAGI, AAVQFVHRWLAVVTALVVLSL, AAATVAQVGLGIATLLSVVWI, and PLATAHQGGALVLTGLLVWTL. A heme-binding site is contributed by histidine 271. Histidine 332 contacts heme.

This sequence belongs to the COX15/CtaA family. Type 2 subfamily. In terms of assembly, interacts with CtaB. The cofactor is heme b.

The protein resides in the cell membrane. The enzyme catalyses Fe(II)-heme o + 2 A + H2O = Fe(II)-heme a + 2 AH2. The protein operates within porphyrin-containing compound metabolism; heme A biosynthesis; heme A from heme O: step 1/1. Catalyzes the conversion of heme O to heme A by two successive hydroxylations of the methyl group at C8. The first hydroxylation forms heme I, the second hydroxylation results in an unstable dihydroxymethyl group, which spontaneously dehydrates, resulting in the formyl group of heme A. The chain is Heme A synthase from Rhodospirillum centenum (strain ATCC 51521 / SW).